The primary structure comprises 152 residues: Large ribosomal subunit protein uL22 (152 aa).

It belongs to the universal ribosomal protein uL22 family. In terms of assembly, part of the 50S ribosomal subunit.

In terms of biological role, this protein binds specifically to 23S rRNA. It makes multiple contacts with different domains of the 23S rRNA in the assembled 50S subunit and ribosome. Functionally, the globular domain of the protein is located near the polypeptide exit tunnel on the outside of the subunit, while an extended beta-hairpin is found that lines the wall of the exit tunnel in the center of the 70S ribosome. This chain is Large ribosomal subunit protein uL22, found in Nitrosopumilus maritimus (strain SCM1).